The chain runs to 132 residues: S-protein homolog 19 (132 aa).

The first 26 residues, 1–26 (MSGSLAFHIIMSVTFMVFFFGGLCEA), serve as a signal peptide directing secretion. Residue Asn87 is glycosylated (N-linked (GlcNAc...) asparagine).

Belongs to the plant self-incompatibility (S1) protein family.

The protein resides in the secreted. This Arabidopsis thaliana (Mouse-ear cress) protein is S-protein homolog 19.